The chain runs to 558 residues: Urocanate hydratase (558 aa).

Residues 50-51, Gln-128, 174-176, Glu-194, Arg-199, 240-241, 261-265, 271-272, and Tyr-320 contribute to the NAD(+) site; these read GG, GMG, NA, QTSAH, and YI. The active site involves Cys-408. Gly-490 is a binding site for NAD(+).

The protein belongs to the urocanase family. Requires NAD(+) as cofactor.

The protein localises to the cytoplasm. It catalyses the reaction 4-imidazolone-5-propanoate = trans-urocanate + H2O. It functions in the pathway amino-acid degradation; L-histidine degradation into L-glutamate; N-formimidoyl-L-glutamate from L-histidine: step 2/3. Catalyzes the conversion of urocanate to 4-imidazolone-5-propionate. In Deinococcus radiodurans (strain ATCC 13939 / DSM 20539 / JCM 16871 / CCUG 27074 / LMG 4051 / NBRC 15346 / NCIMB 9279 / VKM B-1422 / R1), this protein is Urocanate hydratase.